A 500-amino-acid chain; its full sequence is Glycogen synthase (500 aa).

K15 contacts ADP-alpha-D-glucose.

Belongs to the glycosyltransferase 1 family. Bacterial/plant glycogen synthase subfamily.

It catalyses the reaction [(1-&gt;4)-alpha-D-glucosyl](n) + ADP-alpha-D-glucose = [(1-&gt;4)-alpha-D-glucosyl](n+1) + ADP + H(+). Its pathway is glycan biosynthesis; glycogen biosynthesis. In terms of biological role, synthesizes alpha-1,4-glucan chains using ADP-glucose. The chain is Glycogen synthase from Protochlamydia amoebophila (strain UWE25).